The following is a 189-amino-acid chain: MPKPKKGARFGGSASHQKAIFANLATALFEHGRITTTESKAKALRPYAEKLVTHAKAGTLAHRREVLKVIRNKDVVHTLFAEIGPFYADRDGGYTRIIKTVPRKGDNAPMAIIELVKEKTVTSEADRARRVKASQDAPAAAPAEENVVEAVEAEATDAEVENADAVVEAIEDETATAADAPEAEEAKKD.

Belongs to the bacterial ribosomal protein bL17 family. In terms of assembly, part of the 50S ribosomal subunit. Contacts protein L32.

This is Large ribosomal subunit protein bL17 from Rhodococcus jostii (strain RHA1).